Here is a 501-residue protein sequence, read N- to C-terminus: Dye-decolorizing peroxidase (501 aa).

The N-terminal stretch at 1–21 (MRLSPSFLSLALVIFVGEVVA) is a signal peptide. The propeptide occupies 22–60 (RNVVARASNPASVTGTRKVSLLKNVAGLPAVPTAQQVAV). The active-site Proton acceptor is D228. N352 carries N-linked (GlcNAc...) asparagine glycosylation. H367 is a heme binding site. N403 carries an N-linked (GlcNAc...) asparagine glycan.

It belongs to the DyP-type peroxidase family. Heme b serves as cofactor.

The protein resides in the secreted. It catalyses the reaction Reactive Blue 5 + 2 H2O2 = 2,2'-disulfonyl azobenzene + 3-[(4-amino-6-chloro-1,3,5-triazin-2-yl)amino]benzenesulfonate + phthalate + 2 H2O + 2 H(+). It carries out the reaction 2 a phenolic donor + H2O2 = 2 a phenolic radical donor + 2 H2O. Functionally, manganese-independent peroxidase that is able to convert a large number of compounds, but its physiological substrate is not known. In addition to classic peroxidase substrates (e.g. 2,6-dimethoxyphenol), oxidizes dyes such as Reactive Blue 5 and Reactive Black 5. This chain is Dye-decolorizing peroxidase, found in Exidia glandulosa (Black witch's butter).